Here is a 198-residue protein sequence, read N- to C-terminus: Autophagy-related protein 16 (198 aa).

The stretch at 24–177 forms a coiled coil; the sequence is ELVQTCSQMA…NKELVDRWMK (154 aa).

This sequence belongs to the ATG16 family. Homodimer. Part of the ATG5-ATG12/ATG16 complex. Several units of each may be present in this complex. Interacts directly with ATG12.

It is found in the preautophagosomal structure membrane. Stabilizes the ATG5-ATG12 conjugate. The ATG5-ATG12/ATG16 complex is required for efficient promotion of ATG8-conjugation to phosphatidylethanolamine and ATG8 localization to the pre-autophagosomal structure (PAS). Also recruits ATG3 to the PAS. Involved in endoplasmic reticulum-specific autophagic process and is essential for the survival of cells subjected to severe ER stress. Autophagy is required for proper vegetative growth, asexual/sexual reproduction, and full virulence. Autophagy is particularly involved in the biosynthesis of deoxynivalenol (DON), an important virulence determinant. This Gibberella zeae (strain ATCC MYA-4620 / CBS 123657 / FGSC 9075 / NRRL 31084 / PH-1) (Wheat head blight fungus) protein is Autophagy-related protein 16.